Here is a 234-residue protein sequence, read N- to C-terminus: Nuclear transcription factor Y subunit C-1 (234 aa).

Disordered regions lie at residues 1–20 (MDTN…PPPP) and 205–234 (SVWQ…DGQG). The segment covering 7-20 (QPPPSAAGIPPPPP) has biased composition (pro residues). The span at 209 to 219 (TSTGTGDDVSY) shows a compositional bias: low complexity. Over residues 220–234 (GSGGSSGQGNLDGQG) the composition is skewed to gly residues.

It belongs to the NFYC/HAP5 subunit family. Heterotrimeric transcription factor composed of three components, NF-YA, NF-YB and NF-YC. NF-YB and NF-YC must interact and dimerize for NF-YA association and DNA binding. In terms of tissue distribution, ubiquitous. Present in etiolated seedlings.

Its subcellular location is the nucleus. Stimulates the transcription of various genes by recognizing and binding to a CCAAT motif in promoters. The sequence is that of Nuclear transcription factor Y subunit C-1 (NFYC1) from Arabidopsis thaliana (Mouse-ear cress).